Consider the following 501-residue polypeptide: ATP-dependent rRNA helicase RRP3 (501 aa).

A coiled-coil region spans residues 3 to 44 (KIVKRKEKKANDELTSLAEKIRAKALENQKKLIEAEKEGGSE). A disordered region spans residues 36-79 (EAEKEGGSESDSEEDATAEKKKVLKSKSKSTVSTQNENTNEDES). Phosphoserine is present on residues Ser-43, Ser-45, and Ser-47. The Q motif motif lies at 81 to 109 (ESFSELNLVPELIQACKNLNYSKPTPIQS). The 173-residue stretch at 112 to 284 (IPPALEGHDI…RASLTNPVKC (173 aa)) folds into the Helicase ATP-binding domain. ATP is bound at residue 125–132 (AQTGSGKT). Residues 231 to 234 (DEAD) carry the DEAD box motif. A Helicase C-terminal domain is found at 307–461 (LKNTYLIYLL…NIILTLRDSV (155 aa)). A disordered region spans residues 480-501 (IARGKGRRGRMMTRENMDMGER). Residues 491–501 (MTRENMDMGER) are compositionally biased toward basic and acidic residues.

The protein belongs to the DEAD box helicase family. DDX47/RRP3 subfamily. As to quaternary structure, interacts with the SSU processome.

The protein resides in the nucleus. The catalysed reaction is ATP + H2O = ADP + phosphate + H(+). With respect to regulation, ATPase activity is stimulated upon the addition of RNA. Functionally, ATP-dependent rRNA helicase required for pre-ribosomal RNA processing. Involved in the maturation of the 35S-pre-rRNA and to its cleavage to mature 18S rRNA. In Saccharomyces cerevisiae (strain ATCC 204508 / S288c) (Baker's yeast), this protein is ATP-dependent rRNA helicase RRP3.